Reading from the N-terminus, the 139-residue chain is Small ribosomal subunit protein uS12 (139 aa).

Residues 119–139 (GVDKRRQQRSAYGAKKPKPKS) form a disordered region.

The protein belongs to the universal ribosomal protein uS12 family. In terms of assembly, part of the 30S ribosomal subunit. Contacts proteins S8 and S17. May interact with IF1 in the 30S initiation complex.

With S4 and S5 plays an important role in translational accuracy. Its function is as follows. Interacts with and stabilizes bases of the 16S rRNA that are involved in tRNA selection in the A site and with the mRNA backbone. Located at the interface of the 30S and 50S subunits, it traverses the body of the 30S subunit contacting proteins on the other side and probably holding the rRNA structure together. The combined cluster of proteins S8, S12 and S17 appears to hold together the shoulder and platform of the 30S subunit. This is Small ribosomal subunit protein uS12 from Mycoplasma genitalium (strain ATCC 33530 / DSM 19775 / NCTC 10195 / G37) (Mycoplasmoides genitalium).